Consider the following 81-residue polypeptide: Cysteine-rich and transmembrane domain-containing protein PCC1 (81 aa).

Residues 1–22 (MNQSAQNYFSVQKPSETSSGPY) show a composition bias toward polar residues. Residues 1 to 34 (MNQSAQNYFSVQKPSETSSGPYTSPPPIGYPTRD) are disordered. A helical membrane pass occupies residues 56-74 (AIMSCFSTCMECIFCCGVC).

The protein belongs to the CYSTM1 family. Expressed at very low levels in seedlings and petioles, and at higher levels in leaves. Also present in phloem sap.

It localises to the cell membrane. In terms of biological role, modulates resistance against pathogens including oomycetes (e.g. Hyaloperonospora parasitica and Phytophthora brassicae) and fungi (e.g. Phytophthora brassicae). Controls the abscisic acid-mediated (ABA) signaling pathways. Regulator of the flowering time in response to stress (e.g. UV-C). Regulates polar lipid content; promotes phosphatidylinositol (PI) and 18:0 but prevents 18:2 and 18:3 polar lipids accumulation. The polypeptide is Cysteine-rich and transmembrane domain-containing protein PCC1 (PCC1) (Arabidopsis thaliana (Mouse-ear cress)).